A 90-amino-acid polypeptide reads, in one-letter code: Sec-independent protein translocase protein TatA (90 aa).

A helical membrane pass occupies residues 1 to 21 (MGLPGGWELVLIVGVLVLLFG). Positions 42 to 60 (EARGMKEDEEAAKREKQAK) are enriched in basic and acidic residues. The tract at residues 42-90 (EARGMKEDEEAAKREKQAKSEPQQLTAGESSAPTVASPVEETQRNDSKK) is disordered. Over residues 61 to 75 (SEPQQLTAGESSAPT) the composition is skewed to polar residues.

It belongs to the TatA/E family. As to quaternary structure, the Tat system comprises two distinct complexes: a TatABC complex, containing multiple copies of TatA, TatB and TatC subunits, and a separate TatA complex, containing only TatA subunits. Substrates initially bind to the TatABC complex, which probably triggers association of the separate TatA complex to form the active translocon.

Its subcellular location is the cell membrane. Its function is as follows. Part of the twin-arginine translocation (Tat) system that transports large folded proteins containing a characteristic twin-arginine motif in their signal peptide across membranes. TatA could form the protein-conducting channel of the Tat system. The chain is Sec-independent protein translocase protein TatA from Saccharopolyspora erythraea (strain ATCC 11635 / DSM 40517 / JCM 4748 / NBRC 13426 / NCIMB 8594 / NRRL 2338).